Here is a 150-residue protein sequence, read N- to C-terminus: Ribonuclease H (150 aa).

One can recognise an RNase H type-1 domain in the interval 1–142 (MSDSVEIFTD…ADQLANRGVD (142 aa)). Mg(2+) contacts are provided by aspartate 10, glutamate 48, aspartate 70, and aspartate 134.

Belongs to the RNase H family. Monomer. The cofactor is Mg(2+).

It localises to the cytoplasm. It carries out the reaction Endonucleolytic cleavage to 5'-phosphomonoester.. Endonuclease that specifically degrades the RNA of RNA-DNA hybrids. In Pseudomonas fluorescens (strain ATCC BAA-477 / NRRL B-23932 / Pf-5), this protein is Ribonuclease H.